The chain runs to 435 residues: Probable protein arginine N-methyltransferase 6 (435 aa).

The interval 1–48 is disordered; sequence MQSGGDFSNGFHGDHHRELELEDKQGPSLSSFGRAKKRSHAGARDPRG. Over residues 12-25 the composition is skewed to basic and acidic residues; the sequence is HGDHHRELELEDKQ. In terms of domain architecture, SAM-dependent MTase PRMT-type spans 80–418; it reads DVAYFHSYAH…KENKRFMNIH (339 aa). S-adenosyl-L-methionine contacts are provided by His93, Arg102, Gly126, Asp148, and Glu177. Catalysis depends on residues Glu191 and Glu200. The segment at 333-377 is disordered; that stretch reads PAKNTSETSIASGSSSISPSGEVNQKKRTNPSDALVLSTSPESPP. A compositionally biased stretch (low complexity) spans 337–354; it reads TSETSIASGSSSISPSGE.

It belongs to the class I-like SAM-binding methyltransferase superfamily. Protein arginine N-methyltransferase family. PRMT6 subfamily.

Its function is as follows. Arginine methyltransferase that can both catalyze the formation of omega-N monomethylarginine (MMA) and asymmetrical dimethylarginine (aDMA). This is Probable protein arginine N-methyltransferase 6 (PRMT6) from Arabidopsis thaliana (Mouse-ear cress).